The following is a 358-amino-acid chain: MHTTLPESTSENFEYYDLAEACDMGDIVALGTVFVVILYSLVFAFGLVGNLLVVFALINSQRSKSITDIYLLNLALSDLLFVATLPFWTHYVINEQGLHHATCKLITAFFFIGFFGGIFFITVISVDRFLAIVLAANSMSNRTVQHGVTTSLGVWAAAILVATPQFMFTREKENECFGDYPEILQEIWPVILNTEINFLGFLLPLLIMSYCYFRIMQTLFSCKNHKKAKAIRLIFLVVVVFFLFWTPYNVMIFLQTLNLYDFFPKCDVKRDLKLAISVTETIAFSHCCLNPLIYAFAGEKFRRYLYRLYRKCLAVLCCHPDHLSFSSSLSESQRSRRESVLSSNFTHYTSDGDASILL.

Residues 1–26 (MHTTLPESTSENFEYYDLAEACDMGD) are Extracellular-facing. The chain crosses the membrane as a helical span at residues 27–47 (IVALGTVFVVILYSLVFAFGL). Residues 48–68 (VGNLLVVFALINSQRSKSITD) are Cytoplasmic-facing. Residues 69–89 (IYLLNLALSDLLFVATLPFWT) traverse the membrane as a helical segment. The Extracellular portion of the chain corresponds to 90–105 (HYVINEQGLHHATCKL). A disulfide bridge connects residues Cys103 and Cys176. The helical transmembrane segment at 106–126 (ITAFFFIGFFGGIFFITVISV) threads the bilayer. Residues 127–147 (DRFLAIVLAANSMSNRTVQHG) are Cytoplasmic-facing. A helical membrane pass occupies residues 148–168 (VTTSLGVWAAAILVATPQFMF). Over 169 to 186 (TREKENECFGDYPEILQE) the chain is Extracellular. A helical membrane pass occupies residues 187–207 (IWPVILNTEINFLGFLLPLLI). Residues 208-232 (MSYCYFRIMQTLFSCKNHKKAKAIR) are Cytoplasmic-facing. A helical transmembrane segment spans residues 233 to 253 (LIFLVVVVFFLFWTPYNVMIF). Over 254 to 275 (LQTLNLYDFFPKCDVKRDLKLA) the chain is Extracellular. The helical transmembrane segment at 276–296 (ISVTETIAFSHCCLNPLIYAF) threads the bilayer. The Cytoplasmic portion of the chain corresponds to 297 to 358 (AGEKFRRYLY…TSDGDASILL (62 aa)). Phosphothreonine is present on Thr349.

The protein belongs to the G-protein coupled receptor 1 family. In terms of assembly, found in a ternary complex with CX3CL1 and ITGAV:ITGB3 or ITGA4:ITGB1. This protein is not N-glycosylated which is unusual for G-protein-coupled receptors.

The protein localises to the cell membrane. Functionally, receptor for the C-X3-C chemokine fractalkine (CX3CL1) present on many early leukocyte cells; CX3CR1-CX3CL1 signaling exerts distinct functions in different tissue compartments, such as immune response, inflammation, cell adhesion and chemotaxis. CX3CR1-CX3CL1 signaling mediates cell migratory functions. Responsible for the recruitment of natural killer (NK) cells to inflamed tissues. Acts as a regulator of inflammation process leading to atherogenesis by mediating macrophage and monocyte recruitment to inflamed atherosclerotic plaques, promoting cell survival. Involved in airway inflammation by promoting interleukin 2-producing T helper (Th2) cell survival in inflamed lung. Involved in the migration of circulating monocytes to non-inflamed tissues, where they differentiate into macrophages and dendritic cells. Acts as a negative regulator of angiogenesis, probably by promoting macrophage chemotaxis. Plays a key role in brain microglia by regulating inflammatory response in the central nervous system (CNS) and regulating synapse maturation. Required to restrain the microglial inflammatory response in the CNS and the resulting parenchymal damage in response to pathological stimuli. Involved in brain development by participating in synaptic pruning, a natural process during which brain microglia eliminates extra synapses during postnatal development. Synaptic pruning by microglia is required to promote the maturation of circuit connectivity during brain development. Acts as an important regulator of the gut microbiota by controlling immunity to intestinal bacteria and fungi. Expressed in lamina propria dendritic cells in the small intestine, which form transepithelial dendrites capable of taking up bacteria in order to provide defense against pathogenic bacteria. Required to initiate innate and adaptive immune responses against dissemination of commensal fungi (mycobiota) component of the gut: expressed in mononuclear phagocytes (MNPs) and acts by promoting induction of antifungal IgG antibodies response to confer protection against disseminated C.albicans or C.auris infection. Also acts as a receptor for C-C motif chemokine CCL26, inducing cell chemotaxis. This is CX3C chemokine receptor 1 from Bos taurus (Bovine).